The primary structure comprises 1037 residues: Importin-8 (1037 aa).

An Importin N-terminal domain is found at 22 to 102; the sequence is AENELNQSYK…RDNIVEGIIR (81 aa). Residues 886–895 are compositionally biased toward basic and acidic residues; that stretch reads DRSKAEKADM. The disordered stretch occupies residues 886-934; sequence DRSKAEKADMEENEEISSDEEETNVTAQAMQSNNGRGEDEEEEDDDWDE. Acidic residues predominate over residues 896–908; sequence EENEEISSDEEET. Phosphoserine is present on residues Ser902 and Ser903. Over residues 909–920 the composition is skewed to polar residues; that stretch reads NVTAQAMQSNNG. Over residues 923–934 the composition is skewed to acidic residues; it reads EDEEEEDDDWDE.

This sequence belongs to the importin beta family. Forms a heterodimer with KPNB1. Interacts with SRP19. Interacts with RPL23A. Binds directly to nuclear pore complexes. Interacts with LRPPRC; the interaction occurs when LRPPRC is in its RNA-free form and promotes import of LRPPRC to the nucleus to allow for EIF4E-mediated export of mRNAS from the nucleus to the cytoplasm.

Its subcellular location is the cytoplasm. The protein resides in the nucleus. Its function is as follows. Involved in nuclear protein import, either by acting as autonomous nuclear transport receptor or as an adapter-like protein in association with the importin-beta subunit KPNB1. Acting autonomously, may serve as receptor for nuclear localization signals (NLS) and promote translocation of import substrates through the nuclear pore complex (NPC) by an energy requiring, Ran-dependent mechanism. At the nucleoplasmic side of the NPC, Ran binds to importin, the importin/substrate complex dissociates and importin is re-exported from the nucleus to the cytoplasm where GTP hydrolysis releases Ran. The directionality of nuclear import is thought to be conferred by an asymmetric distribution of the GTP- and GDP-bound forms of Ran between the cytoplasm and nucleus. In vitro mediates the nuclear import of the signal recognition particle protein SRP19. May also be involved in cytoplasm-to-nucleus shuttling of a broad spectrum of other cargos, including Argonaute-microRNAs complexes, the JUN protein, RELA/NF-kappa-B p65 subunit, the translation initiation factor EIF4E and a set of receptor-activated mothers against decapentaplegic homolog (SMAD) transcription factors that play a critical role downstream of the large family of transforming growth factor beta and bone morphogenetic protein (BMP) cytokines. This Homo sapiens (Human) protein is Importin-8 (IPO8).